A 310-amino-acid chain; its full sequence is MDWENCSSLTDFFLLGITNNPEMKVTLFAVFLAVYIINFSANLGMIVLIRMDYQLHTPMYFFLSHLSFCDLCYSTATGPKMLVDLLAKNKSIPFYGCALQFLVFCIFADSECLLLSVMAFDRYKAIINPLLYTVNMSSRVCYLLLTGVYLVGIADALIHMTLAFRLCFCGSNEINHFFCDIPPLLLLSRSDTQVNELVLFTVFGFIELSTISGVFISYCYIILSVLEIHSAEGRFKALSTCTSHLSAVAIFQGTLLFMYFRPSSSYSLDQDKMTSLFYTLVVPMLNPLIYSLRNKDVKEALKKLKNKILF.

Residues 1–25 lie on the Extracellular side of the membrane; sequence MDWENCSSLTDFFLLGITNNPEMKV. N-linked (GlcNAc...) asparagine glycosylation is present at Asn-5. The helical transmembrane segment at 26 to 46 threads the bilayer; that stretch reads TLFAVFLAVYIINFSANLGMI. The Cytoplasmic portion of the chain corresponds to 47–54; that stretch reads VLIRMDYQ. A helical membrane pass occupies residues 55-75; that stretch reads LHTPMYFFLSHLSFCDLCYST. Topologically, residues 76–99 are extracellular; that stretch reads ATGPKMLVDLLAKNKSIPFYGCAL. A helical transmembrane segment spans residues 100 to 120; it reads QFLVFCIFADSECLLLSVMAF. Residues 121–139 are Cytoplasmic-facing; that stretch reads DRYKAIINPLLYTVNMSSR. The helical transmembrane segment at 140-160 threads the bilayer; it reads VCYLLLTGVYLVGIADALIHM. Over 161–196 the chain is Extracellular; that stretch reads TLAFRLCFCGSNEINHFFCDIPPLLLLSRSDTQVNE. The helical transmembrane segment at 197–217 threads the bilayer; it reads LVLFTVFGFIELSTISGVFIS. Residues 218 to 237 are Cytoplasmic-facing; that stretch reads YCYIILSVLEIHSAEGRFKA. The helical transmembrane segment at 238-258 threads the bilayer; that stretch reads LSTCTSHLSAVAIFQGTLLFM. The Extracellular segment spans residues 259-271; that stretch reads YFRPSSSYSLDQD. The helical transmembrane segment at 272–292 threads the bilayer; that stretch reads KMTSLFYTLVVPMLNPLIYSL. Topologically, residues 293 to 310 are cytoplasmic; the sequence is RNKDVKEALKKLKNKILF.

It belongs to the G-protein coupled receptor 1 family.

Its subcellular location is the cell membrane. Functionally, odorant receptor. The sequence is that of Olfactory receptor 5W2 (OR5W2) from Homo sapiens (Human).